The chain runs to 252 residues: Ribonuclease HII (252 aa).

An RNase H type-2 domain is found at 41 to 232 (LLVAGVDEAG…VRLALEGREQ (192 aa)). A divalent metal cation-binding residues include aspartate 47, glutamate 48, and aspartate 140.

It belongs to the RNase HII family. Requires Mn(2+) as cofactor. Mg(2+) is required as a cofactor.

Its subcellular location is the cytoplasm. It carries out the reaction Endonucleolytic cleavage to 5'-phosphomonoester.. Its function is as follows. Endonuclease that specifically degrades the RNA of RNA-DNA hybrids. The sequence is that of Ribonuclease HII from Xanthomonas oryzae pv. oryzae (strain KACC10331 / KXO85).